The sequence spans 112 residues: MGAECCKQLCRSLHPYAADSLKDSSGRRVDLGTEFSVLTDTSDDEDQVGAGERDDFVQKQLTTPLLSDKNSAIPLTVVTPIQLGANKGGGKRTSSLKSAKNGAGVKKKVRAL.

The N-myristoyl glycine; by host moiety is linked to residue Gly-2. Residues Gly-84–Leu-112 form a disordered region.

It belongs to the herpesviridae cytoplasmic envelopment protein 3 family. Interacts with cytoplasmic envelopment protein 2; this interaction is essential for the proper localization of each protein to the assembly complex and thus for the production of infectious virus. Myristoylation and palmitoylation (probably on one or more of the nearby cysteines at the N-terminus) enable membrane-binding and Golgi apparatus-specific targeting and are essential for efficient packaging. Post-translationally, phosphorylated. Phosphorylation does not seem to be required for recycling to the host Golgi apparatus. Packaging is selective for underphosphorylated forms.

It is found in the virion tegument. It localises to the virion membrane. Its subcellular location is the host cell membrane. The protein resides in the host Golgi apparatus membrane. Its function is as follows. Plays an important role in the cytoplasmic envelopment of tegument proteins and capsids during the assembly and egress processes. Also participates in viral entry at the fusion step probably by regulating the core fusion machinery. This chain is Cytoplasmic envelopment protein 3 (UL99), found in Murid herpesvirus 1 (strain K181) (MuHV-1).